Here is a 336-residue protein sequence, read N- to C-terminus: Dihydroorotate dehydrogenase (quinone) (336 aa).

FMN is bound by residues 62 to 66 (AGLDK) and Thr86. Lys66 lines the substrate pocket. Substrate is bound at residue 111–115 (NRMGF). FMN is bound by residues Asn139 and Asn172. Asn172 contributes to the substrate binding site. Ser175 acts as the Nucleophile in catalysis. A substrate-binding site is contributed by Asn177. FMN-binding residues include Lys217 and Thr245. 246-247 (NT) provides a ligand contact to substrate. FMN contacts are provided by residues Gly268, Gly297, and 318–319 (YS).

The protein belongs to the dihydroorotate dehydrogenase family. Type 2 subfamily. Monomer. Requires FMN as cofactor.

Its subcellular location is the cell membrane. It carries out the reaction (S)-dihydroorotate + a quinone = orotate + a quinol. Its pathway is pyrimidine metabolism; UMP biosynthesis via de novo pathway; orotate from (S)-dihydroorotate (quinone route): step 1/1. Catalyzes the conversion of dihydroorotate to orotate with quinone as electron acceptor. This Escherichia fergusonii (strain ATCC 35469 / DSM 13698 / CCUG 18766 / IAM 14443 / JCM 21226 / LMG 7866 / NBRC 102419 / NCTC 12128 / CDC 0568-73) protein is Dihydroorotate dehydrogenase (quinone).